The following is a 202-amino-acid chain: Probable chemoreceptor glutamine deamidase CheD 2 (202 aa).

It belongs to the CheD family.

The enzyme catalyses L-glutaminyl-[protein] + H2O = L-glutamyl-[protein] + NH4(+). Functionally, probably deamidates glutamine residues to glutamate on methyl-accepting chemotaxis receptors (MCPs), playing an important role in chemotaxis. The sequence is that of Probable chemoreceptor glutamine deamidase CheD 2 from Shewanella oneidensis (strain ATCC 700550 / JCM 31522 / CIP 106686 / LMG 19005 / NCIMB 14063 / MR-1).